A 491-amino-acid chain; its full sequence is Protein SET DOMAIN GROUP 40 (491 aa).

The region spanning 36 to 278 (HSLSVSDFPD…LGEQVLLCYG (243 aa)) is the SET domain.

Belongs to the class V-like SAM-binding methyltransferase superfamily.

In Arabidopsis thaliana (Mouse-ear cress), this protein is Protein SET DOMAIN GROUP 40 (SDG40).